The following is a 302-amino-acid chain: Dioxygenase olcK (302 aa).

Residues His-136, Asp-138, and His-213 each contribute to the Fe cation site.

Belongs to the PhyH family. In terms of assembly, homodimer. Requires Fe cation as cofactor.

The protein resides in the peroxisome matrix. It functions in the pathway secondary metabolite biosynthesis; terpenoid biosynthesis. Dioxygenase; part of the gene cluster that mediates the biosynthesis of 15-deoxyoxalicine B. The first step of the pathway is the synthesis of nicotinyl-CoA from nicotinic acid by the nicotinic acid-CoA ligase olcI. Nicotinyl-CoA is then a substrate of polyketide synthase olcA to produce 4-hydroxy-6-(3-pyridinyl)-2H-pyran-2-one (HPPO) which is further prenylated by the polyprenyl transferase olcH to yield geranylgeranyl-HPPO. Geranylgeranyl pyrophosphate is provided by the cluster-specific geranylgeranyl pyrophosphate synthase olcC. The FAD-dependent monooxygenase olcE catalyzes the epoxidation of geranylgeranyl-HPPO and the terpene cyclase olcD catalyzes the cyclization of the terpenoid component, resulting in the formation of the tricyclic terpene moiety seen in predecaturin E. The cytochrome P450 monooxygenase then catalyzes the allylic oxidation of predecaturin E, which is followed by spirocylization with concomitant loss of one molecule of water to form decaturin E. Decaturin E is the substrate of the cytochrome P450 monooxygenase olcJ which hydroxylates it at the C-29 position to form decaturin F. The short-chain dehydrogenase/reductase olcF may catalyze the oxidation of decaturin F to generate the 29-hydroxyl-27-one intermediate, and subsequent hemiacetal formation probably leads to the formation of decaturin C. The dioxygenase olcK may be a peroxisomal enzyme that catalyzes the hydroxylation of decaturin C into decaturin A once decaturin C is shuttled into the peroxisome by the MFS transporter olcL. Finally the cytochrome P450 monooxygenase olcB catalyzes the oxidative rearrangement to yield 15-deoxyoxalicine B. In the absence of olcJ, decaturin E may be shunted to a pathway in which it is oxidized to a ketone, possibly by olcF, to form decaturin D, which undergoes further allylic oxidation to yield decaturin G. Moreover, in the absence of oclK or oclL, oclB can convert decaturin C into 15-deoxyoxalicine A. The sequence is that of Dioxygenase olcK from Penicillium canescens.